Consider the following 494-residue polypeptide: Smoothelin-like protein 1 (494 aa).

Composition is skewed to basic and acidic residues over residues 1-10 (MEQKEGKLSE), 74-104 (DEVKVESQREAGGKEDAEAELKKEDGEKEET), 112-166 (TGRK…KATV), and 179-232 (TGQR…KEEA). The disordered stretch occupies residues 1 to 348 (MEQKEGKLSE…ARPRGPRAQN (348 aa)). Residues 123–145 (KEAEEKESTLASEKQKAEEKEAK) are a coiled coil. A compositionally biased stretch (acidic residues) spans 233–255 (DAKEEAEDAEEAEPGSPSEEQEQ). Low complexity-rich tracts occupy residues 269–279 (PSSPEEWPESP) and 302–314 (SPSASESSPSDVP). A compositionally biased stretch (basic and acidic residues) spans 324-335 (GEKKEKAPERRV). A Phosphoserine modification is found at S336. The Calponin-homology (CH) domain maps to 378-484 (GGVKNMLLEW…YIQELYRSLV (107 aa)). The segment at 476–494 (IQELYRSLVQKGLVKTKKK) is calmodulin-binding.

Belongs to the smoothelin family. As to quaternary structure, interacts with PPP1R12A. Post-translationally, maximal phosphorylation of Ser-336 correlates with maximal relaxation of aorta in response to acetylcholine. Expressed in striated muscles, specifically in type 2a fibers (at protein level).

The protein localises to the cytoplasm. Its subcellular location is the myofibril. It localises to the sarcomere. It is found in the i band. The protein resides in the m line. The protein localises to the nucleus. Its function is as follows. Plays a role in the regulation of contractile properties of both striated and smooth muscles. When unphosphorylated, may inhibit myosin dephosphorylation. Phosphorylation at Ser-299 reduces this inhibitory activity. The sequence is that of Smoothelin-like protein 1 (SMTNL1) from Homo sapiens (Human).